The sequence spans 219 residues: Thymidylate kinase (219 aa).

Glycine 7–serine 14 contributes to the ATP binding site.

It belongs to the thymidylate kinase family.

It carries out the reaction dTMP + ATP = dTDP + ADP. Functionally, phosphorylation of dTMP to form dTDP in both de novo and salvage pathways of dTTP synthesis. The sequence is that of Thymidylate kinase from Chlorobium phaeobacteroides (strain DSM 266 / SMG 266 / 2430).